Here is a 235-residue protein sequence, read N- to C-terminus: Type III pantothenate kinase (235 aa).

Position 6–13 (6–13) interacts with ATP; that stretch reads DVGNNYIK. Substrate contacts are provided by residues Tyr81 and 88–91; that span reads GTDR. Asp90 acts as the Proton acceptor in catalysis. Residue Asp111 coordinates K(+). Position 114 (Thr114) interacts with ATP. Thr166 serves as a coordination point for substrate.

The protein belongs to the type III pantothenate kinase family. Homodimer. Requires NH4(+) as cofactor. K(+) serves as cofactor.

It localises to the cytoplasm. The enzyme catalyses (R)-pantothenate + ATP = (R)-4'-phosphopantothenate + ADP + H(+). Its pathway is cofactor biosynthesis; coenzyme A biosynthesis; CoA from (R)-pantothenate: step 1/5. Functionally, catalyzes the phosphorylation of pantothenate (Pan), the first step in CoA biosynthesis. The polypeptide is Type III pantothenate kinase (Cytophaga hutchinsonii (strain ATCC 33406 / DSM 1761 / CIP 103989 / NBRC 15051 / NCIMB 9469 / D465)).